Consider the following 444-residue polypeptide: C4-dicarboxylate transport protein 2 (444 aa).

The next 6 helical transmembrane spans lie at 23–43 (ILYVQVLAAIVLGVIVGWLWP), 61–81 (LIKMAIAPIIFCTVVSGIAHI), 95–115 (LVYFEVVSTFALALGLVVANV), 162–182 (GEILQVLLFAILFGFALMGLG), 198–218 (AMFGVISIVVKVAPIGAFGAM), and 236–256 (LIATFYLTAFLFVVVGLGIIA).

It belongs to the dicarboxylate/amino acid:cation symporter (DAACS) (TC 2.A.23) family.

The protein resides in the cell inner membrane. Its function is as follows. Responsible for the transport of dicarboxylates such as succinate, fumarate, and malate from the periplasm across the membrane. The sequence is that of C4-dicarboxylate transport protein 2 from Bradyrhizobium diazoefficiens (strain JCM 10833 / BCRC 13528 / IAM 13628 / NBRC 14792 / USDA 110).